Reading from the N-terminus, the 229-residue chain is Cytidylate kinase (229 aa).

12-20 (GPSGVGKST) is an ATP binding site.

This sequence belongs to the cytidylate kinase family. Type 1 subfamily.

Its subcellular location is the cytoplasm. It catalyses the reaction CMP + ATP = CDP + ADP. The enzyme catalyses dCMP + ATP = dCDP + ADP. In Mesomycoplasma hyopneumoniae (strain 7448) (Mycoplasma hyopneumoniae), this protein is Cytidylate kinase.